We begin with the raw amino-acid sequence, 211 residues long: N-(5'-phosphoribosyl)anthranilate isomerase (211 aa).

Belongs to the TrpF family.

It carries out the reaction N-(5-phospho-beta-D-ribosyl)anthranilate = 1-(2-carboxyphenylamino)-1-deoxy-D-ribulose 5-phosphate. It participates in amino-acid biosynthesis; L-tryptophan biosynthesis; L-tryptophan from chorismate: step 3/5. In Pseudomonas aeruginosa (strain LESB58), this protein is N-(5'-phosphoribosyl)anthranilate isomerase.